We begin with the raw amino-acid sequence, 65 residues long: DNA-directed RNA polymerase subunit Rpo10 (65 aa).

Residues Cys-7, Cys-10, Cys-44, and Cys-45 each contribute to the Zn(2+) site.

This sequence belongs to the archaeal Rpo10/eukaryotic RPB10 RNA polymerase subunit family. Part of the RNA polymerase complex. Zn(2+) is required as a cofactor.

It is found in the cytoplasm. The catalysed reaction is RNA(n) + a ribonucleoside 5'-triphosphate = RNA(n+1) + diphosphate. DNA-dependent RNA polymerase (RNAP) catalyzes the transcription of DNA into RNA using the four ribonucleoside triphosphates as substrates. The protein is DNA-directed RNA polymerase subunit Rpo10 of Nanoarchaeum equitans (strain Kin4-M).